We begin with the raw amino-acid sequence, 133 residues long: Small ribosomal subunit protein uS8c (133 aa).

The protein belongs to the universal ribosomal protein uS8 family. Part of the 30S ribosomal subunit.

The protein localises to the plastid. It localises to the chloroplast. Its function is as follows. One of the primary rRNA binding proteins, it binds directly to 16S rRNA central domain where it helps coordinate assembly of the platform of the 30S subunit. In Mesostigma viride (Green alga), this protein is Small ribosomal subunit protein uS8c (rps8).